We begin with the raw amino-acid sequence, 694 residues long: Beta-galactosidase (694 aa).

Residues 1–31 (MGKRFPSGWFSPRVHPPRRQRSPMTNQATPG) form a disordered region. The segment covering 22-31 (SPMTNQATPG) has biased composition (polar residues). Residues R144 and N182 each contribute to the substrate site. The Proton donor role is filled by E183. Catalysis depends on E341, which acts as the Nucleophile. Substrate is bound by residues W349 and 389 to 392 (EKFH).

It belongs to the glycosyl hydrolase 42 family. In terms of assembly, homotrimer.

It catalyses the reaction Hydrolysis of terminal non-reducing beta-D-galactose residues in beta-D-galactosides.. With respect to regulation, strongly inhibited by glucose. No activity is lost during treatment with 100 mM EDTA after 2 hours. Activity not considerably affected by metal ions (5 mM), including Na(+), K(+), Mg(2+), Co(2+) and Ca(2+). Completely inhibited by Cu(2+) and Zn(2+) (5 mM) and is strongly inhibited by Mn(2+) (11%), Fe(2+) (25%) and Ni(2+) (38%) in comparison with the activity in the absence of cations (100%). Activity not affected by dithiothreitol, beta-mercaptoethanol and L-cysteine whereas reduced glutathione almost completely inactivates it. With ONPG as substrate, the addition of ethanol up to 20% still slightly stimulates activity. The activity increases up to 120% in the presence of 8% v/v ethanol at pH 5.5. In terms of biological role, hydrolyzes p-nitrophenyl-beta-D-galactopyranoside (PNPG), o-nitrophenyl-beta-D-galactopyranoside (ONPG) and chromogen 5-bromo-4-chloro-3-indolyl-beta-D-galactopyranoside (X-gal), with highest activity against PNPG. Also acts on p-nitrophenyl-beta-D-glucopyranoside (PNPGlu) and o-nitrophenyl-beta-D-glucopyranoside (ONPGlu), but with significantly lower activity. The sequence is that of Beta-galactosidase from Arthrobacter sp.